A 176-amino-acid polypeptide reads, in one-letter code: Japanin (176 aa).

The first 24 residues, 1–24, serve as a signal peptide directing secretion; the sequence is MKVLRCLVCSFYIIVSLITTMTIG. Glutamate 47 contributes to the cholesterol binding site. 2 cysteine pairs are disulfide-bonded: cysteine 52/cysteine 174 and cysteine 138/cysteine 162. N-linked (GlcNAc...) asparagine glycans are attached at residues asparagine 59 and asparagine 155.

This sequence belongs to the calycin superfamily. Lipocalin family. As to quaternary structure, homodimer; non-disulfide-linked. Each monomer accommodates one molecule of cholesterol in a pocket. As to expression, expressed in salivary glands.

It is found in the secreted. Functionally, salivary tick protein that modulates host immune response. This protein blocks dendritic cell (DC) differentiation from monocytes. In addition, it inhibits up-regulation of costimulatory molecules and pro-inflammatory cytokines in response to stimuli and promotes up-regulation of co-inhibitory molecules and the anti-inflammatory cytokine interleukin-10. It has a pocket to accomodate cholesterol, which may have immune-modulatory roles, either directly or through interactions with the host gut microbiota. The polypeptide is Japanin (Rhipicephalus appendiculatus (Brown ear tick)).